A 483-amino-acid polypeptide reads, in one-letter code: Acyl-coenzyme A thioesterase 2, mitochondrial (483 aa).

An N6-acetyllysine modification is found at K104. Active-site charge relay system residues include S294, D388, and H422. K470 carries the N6-succinyllysine modification. The Microbody targeting signal motif lies at 481–483 (SKV).

Belongs to the C/M/P thioester hydrolase family. As to quaternary structure, monomer. In terms of tissue distribution, strongest expression in heart, liver, muscle and kidney. Weak in placenta and pancreas.

It is found in the mitochondrion. It carries out the reaction hexadecanoyl-CoA + H2O = hexadecanoate + CoA + H(+). The enzyme catalyses tetradecanoyl-CoA + H2O = tetradecanoate + CoA + H(+). The catalysed reaction is octadecanoyl-CoA + H2O = octadecanoate + CoA + H(+). It catalyses the reaction eicosanoyl-CoA + H2O = eicosanoate + CoA + H(+). It carries out the reaction decanoyl-CoA + H2O = decanoate + CoA + H(+). The enzyme catalyses dodecanoyl-CoA + H2O = dodecanoate + CoA + H(+). The catalysed reaction is (9Z)-octadecenoyl-CoA + H2O = (9Z)-octadecenoate + CoA + H(+). It catalyses the reaction (9Z)-hexadecenoyl-CoA + H2O = (9Z)-hexadecenoate + CoA + H(+). It carries out the reaction (9E)-octadecenoyl-CoA + H2O = (9E)-octadecenoate + CoA + H(+). The enzyme catalyses (9Z,12Z)-octadecadienoyl-CoA + H2O = (9Z,12Z)-octadecadienoate + CoA + H(+). It functions in the pathway lipid metabolism; fatty acid metabolism. In terms of biological role, catalyzes the hydrolysis of acyl-CoAs into free fatty acids and coenzyme A (CoASH), regulating their respective intracellular levels. Displays higher activity toward long chain acyl CoAs (C14-C20). The enzyme is involved in enhancing the hepatic fatty acid oxidation in mitochondria. The polypeptide is Acyl-coenzyme A thioesterase 2, mitochondrial (ACOT2) (Homo sapiens (Human)).